The chain runs to 597 residues: Leukocyte immunoglobulin-like receptor subfamily B member 2 (597 aa).

An N-terminal signal peptide occupies residues 1–21; the sequence is MTPIVTVLICLGLSLGPRTRV. Residues 22–460 lie on the Extracellular side of the membrane; that stretch reads QTGTIPKPTL…QSGLGRHLGV (439 aa). Ig-like C2-type domains are found at residues 27–110, 111–229, 230–318, and 330–419; these read PKPT…SELS, DPLV…SLSV, QPGP…ILIT, and QPGP…LVVS. 4 disulfides stabilise this stretch: Cys49–Cys98, Cys144–Cys196, Cys156–Cys166, and Cys245–Cys296. Residues Asn280, Asn301, and Asn340 are each glycosylated (N-linked (GlcNAc...) asparagine). A disulfide bond links Cys345 and Cys396. Positions 417–451 are disordered; that stretch reads VVSGPSMGSSPPPTGPISTPGPEDQPLTPTGSDPQ. A helical membrane pass occupies residues 461 to 481; that stretch reads VIGILVAVVLLLLLLLLLFLI. Residues 482–597 lie on the Cytoplasmic side of the membrane; the sequence is LRHRRQGKHW…PSIYATLAIH (116 aa). The tract at residues 491 to 523 is disordered; that stretch reads WTSTQRKADFQHPAGAVGPEPTDRGLQWRSSPA. 3 consecutive short sequence motifs (ITIM motif) follow at residues 530-535, 559-564, and 589-594; these read NLYAAV, VTYAQL, and SIYATL. The interval 537-597 is disordered; that stretch reads DTQPEDGVEM…PSIYATLAIH (61 aa).

As to quaternary structure, binds PTPN6 when phosphorylated. Binds FCGR1A. Interacts with peptide-bound HLA-G-B2M; this interaction is direct. Interacts with peptide-bound HLA-F-B2M; this interaction is direct. Post-translationally, phosphorylated on tyrosine residues. Dephosphorylated by PTPN6. In terms of tissue distribution, expressed in monocytes and at lower levels in myeloid and plasmacytoid dendritic cells. Expressed in tolerogenic IL10-producing dendritic cells. Expressed in myeloid-derived suppressor cells during pregnancy. Detected at low levels in natural killer (NK) cells. Expressed in B cells.

Its subcellular location is the cell membrane. Its function is as follows. Receptor for class I MHC antigens. Recognizes a broad spectrum of HLA-A, HLA-B, HLA-C, HLA-G and HLA-F alleles. Involved in the down-regulation of the immune response and the development of tolerance. Recognizes HLA-G in complex with B2M/beta-2 microglobulin and a nonamer self-peptide (peptide-bound HLA-G-B2M) triggering differentiation of type 1 regulatory T cells and myeloid-derived suppressor cells, both of which actively maintain maternal-fetal tolerance. Competes with CD8A for binding to class I MHC antigens. Inhibits FCGR1A-mediated phosphorylation of cellular proteins and mobilization of intracellular calcium ions. The chain is Leukocyte immunoglobulin-like receptor subfamily B member 2 from Homo sapiens (Human).